The primary structure comprises 294 residues: UPF0761 membrane protein YPN_0254 (294 aa).

7 consecutive transmembrane segments (helical) span residues L44–F64, I67–I87, G108–W128, L136–A156, V185–V205, A212–M232, and V246–L266.

This sequence belongs to the UPF0761 family.

It is found in the cell inner membrane. This chain is UPF0761 membrane protein YPN_0254, found in Yersinia pestis bv. Antiqua (strain Nepal516).